Consider the following 109-residue polypeptide: MKDLGGLMKQAQAMQQKLADAQARLAELTVEGTSGGGMVTVTLRGNGELAKVVLDESLIEPGEGEVIADLIVAAHADAKKKLDAQQAQLMQEAAGPMAGMMGGLPGMKF.

Belongs to the YbaB/EbfC family. In terms of assembly, homodimer.

It localises to the cytoplasm. The protein resides in the nucleoid. Binds to DNA and alters its conformation. May be involved in regulation of gene expression, nucleoid organization and DNA protection. This Caulobacter sp. (strain K31) protein is Nucleoid-associated protein Caul_4574.